We begin with the raw amino-acid sequence, 957 residues long: MATIQLTDQQRKVLHEVACTTAAPVLDTASKDKIKQLLDDYDMRKAAMGSKPGANMVLPGQVLGEAGPFLDYGHPPGVALGDKFKDRGQVMVAGVHGTTVRGIHAPNAGSEHFVRGAYSVLMSGVYVDDEDMGEAFWYTGEGGMDGKKQVKDQQMASGSNAALKNNCDTRTPVRVVRGFVQEAGGGEGGGGGEGGGGAKKGKGGKGGGKKEKGLVYEGLYLVLECKMEPSKDGPQVCKFLMHGLPGHSTVSAKVEYNIFGNAGSAYSLHARRLAGAGAPAGGKRARKAAQDEKARELARQWMLSEIRRQYPGPELQLEDVSGGQEAVPIPVINQVNSERLPTDFAYTREYAWAPGVYQLVAPALRLADEEMLQFSREGDRGGVCGIAFNRHIAALDRRLEQEGRLPQGYEAHLEEQYNAAGCLMVTDPCGVHECGDGCSAKACRRNMQLSAGVQLPLEVFMTESKGWGVRCREEVPAGAFVCCYVGQLITDAMAEVRKGVDHYLFDLDFFAHIYAEIAEKGMQAVAEEIPLHKIPPVLSVGMIRQAQINAADAARRLPEQQPQQQQPQQQQQQPAAGGAAPGGAAAGEQAAGGAEGGGAYGGGGAAAAATAAGTAPGAGDNMDGVEGPAAQRSGGEEAAAGPGSSGAAGGCGYRLDGMVTREGLAQAAHALAEACDALARSVADGASTNLGGENILAAIEAAKARAAAAATTSGGAAAADQHQLEQLDRAAALAAASKAAADAVKAGDPGAFYLQPIISRDEEKAAERAAAAAAAAAAAAGVPPALPSTSDVGNGGTTGSGGGGGAFSNRGPAGCAVGSPRALAARSGMEAAAQAAGGAASGPVAGPGAVEDHGEEYAPMLVIDARTTGNVGRFINHSCDGNLTIQAVFAGVYRSTLLYHVGLYACRNIPQLEELSYNYGYHKQQQQQQQAQRGGAAEKQFVMQCNCGAVGCIGNLM.

A YDG domain is found at 73–243 (GHPPGVALGD…PQVCKFLMHG (171 aa)). The tract at residues 182-209 (EAGGGEGGGGGEGGGGAKKGKGGKGGGK) is disordered. Over residues 183 to 198 (AGGGEGGGGGEGGGGA) the composition is skewed to gly residues. The Pre-SET domain maps to 319-441 (DVSGGQEAVP…HECGDGCSAK (123 aa)). Residues 455–920 (LPLEVFMTES…QLEELSYNYG (466 aa)) form the SET domain. Disordered regions lie at residues 552–595 (DAAR…GGAE), 611–647 (AAGTAPGAGDNMDGVEGPAAQRSGGEEAAAGPGSSGA), and 783–805 (PPALPSTSDVGNGGTTGSGGGGG). Over residues 560 to 578 (QQPQQQQPQQQQQQPAAGG) the composition is skewed to low complexity. Residues 793-805 (GNGGTTGSGGGGG) show a composition bias toward gly residues. A Post-SET domain is found at 941 to 957 (FVMQCNCGAVGCIGNLM).

Belongs to the class V-like SAM-binding methyltransferase superfamily. Histone-lysine methyltransferase family. Suvar3-9 subfamily.

It is found in the nucleus. Its subcellular location is the chromosome. It catalyses the reaction L-lysyl(9)-[histone H3] + S-adenosyl-L-methionine = N(6)-methyl-L-lysyl(9)-[histone H3] + S-adenosyl-L-homocysteine + H(+). In terms of biological role, histone methyltransferase. Monomethylates specifically 'Lys-9' of histone H3. H3 'Lys-9Me1' (H3K9me1) functions as an epigenetic mark of repressed chromatin. In Chlamydomonas reinhardtii (Chlamydomonas smithii), this protein is Histone-lysine N-methyltransferase, H3 lysine-9 specific SUVH3 (SUVH3).